Reading from the N-terminus, the 91-residue chain is Small ribosomal subunit protein uS19 (91 aa).

This sequence belongs to the universal ribosomal protein uS19 family.

Protein S19 forms a complex with S13 that binds strongly to the 16S ribosomal RNA. This chain is Small ribosomal subunit protein uS19, found in Psychrobacter sp. (strain PRwf-1).